The primary structure comprises 339 residues: Deubiquitinase and deneddylase Dub2 (339 aa).

A helical transmembrane segment spans residues 36 to 56 (IIIALFLIVISCGLILCAYTF). Active-site residues include His203, Asp220, and Cys282.

Belongs to the peptidase C48 family.

The protein localises to the secreted. The protein resides in the host cell. It localises to the membrane. Effector proteins function to alter host cell physiology and promote bacterial survival in host tissues. This protease possesses deubiquitinating and deneddylating activities. In Chlamydia trachomatis serovar D (strain ATCC VR-885 / DSM 19411 / UW-3/Cx), this protein is Deubiquitinase and deneddylase Dub2 (cdu2).